We begin with the raw amino-acid sequence, 394 residues long: Dual-specificity RNA methyltransferase RlmN (394 aa).

The Proton acceptor role is filled by glutamate 92. One can recognise a Radical SAM core domain in the interval 98-341 (ENDRGTLCIS…TTVRRTRGDD (244 aa)). Cysteine 105 and cysteine 346 are joined by a disulfide. [4Fe-4S] cluster is bound by residues cysteine 112, cysteine 116, and cysteine 119. S-adenosyl-L-methionine is bound by residues 166–167 (GE), serine 198, 220–222 (SLH), and asparagine 303. Residue cysteine 346 is the S-methylcysteine intermediate of the active site. Residues 374-394 (DSAVQRRADAAPSGSATETTR) form a disordered region.

Belongs to the radical SAM superfamily. RlmN family. [4Fe-4S] cluster is required as a cofactor.

It localises to the cytoplasm. It carries out the reaction adenosine(2503) in 23S rRNA + 2 reduced [2Fe-2S]-[ferredoxin] + 2 S-adenosyl-L-methionine = 2-methyladenosine(2503) in 23S rRNA + 5'-deoxyadenosine + L-methionine + 2 oxidized [2Fe-2S]-[ferredoxin] + S-adenosyl-L-homocysteine. The enzyme catalyses adenosine(37) in tRNA + 2 reduced [2Fe-2S]-[ferredoxin] + 2 S-adenosyl-L-methionine = 2-methyladenosine(37) in tRNA + 5'-deoxyadenosine + L-methionine + 2 oxidized [2Fe-2S]-[ferredoxin] + S-adenosyl-L-homocysteine. Specifically methylates position 2 of adenine 2503 in 23S rRNA and position 2 of adenine 37 in tRNAs. m2A2503 modification seems to play a crucial role in the proofreading step occurring at the peptidyl transferase center and thus would serve to optimize ribosomal fidelity. The chain is Dual-specificity RNA methyltransferase RlmN from Methylibium petroleiphilum (strain ATCC BAA-1232 / LMG 22953 / PM1).